The following is a 106-amino-acid chain: Iron-sulfur cluster assembly protein CyaY (106 aa).

Belongs to the frataxin family.

Involved in iron-sulfur (Fe-S) cluster assembly. May act as a regulator of Fe-S biogenesis. The protein is Iron-sulfur cluster assembly protein CyaY of Photorhabdus laumondii subsp. laumondii (strain DSM 15139 / CIP 105565 / TT01) (Photorhabdus luminescens subsp. laumondii).